A 298-amino-acid polypeptide reads, in one-letter code: Troponin T, cardiac muscle (298 aa).

The span at 1–70 shows a compositional bias: acidic residues; it reads MSDIEEVVEE…EAKEAEDGPM (70 aa). 2 disordered regions span residues 1-95 and 120-219; these read MSDI…GERV and FENR…EKKK. Serine 2 bears the N-acetylserine mark. Serine 2 carries the post-translational modification Phosphoserine; by CK2. Composition is skewed to basic and acidic residues over residues 120 to 183 and 203 to 219; these read FENR…DEAR and QTER…EKKK. Position 204 is a phosphothreonine; by PKC/PRKCA (threonine 204). The residue at position 208 (serine 208) is a Phosphoserine; by PKC/PRKCA. Phosphothreonine; by PKC/PRKCA and RAF1 is present on threonine 213. Threonine 294 is subject to Phosphothreonine; by PKC/PRKCA.

It belongs to the troponin T family. Post-translationally, phosphorylation at Thr-213 by PRKCA induces significant reduction in myofilament calcium sensitivity and actomyosin ATPase activity. In terms of tissue distribution, heart. The fetal heart shows a greater expression in the atrium than in the ventricle, while the adult heart shows a greater expression in the ventricle than in the atrium. Isoform 6 predominates in normal adult heart. Isoforms 1, 7 and 8 are expressed in fetal heart. Isoform 7 is also expressed in failing adult heart.

Troponin T is the tropomyosin-binding subunit of troponin, the thin filament regulatory complex which confers calcium-sensitivity to striated muscle actomyosin ATPase activity. This chain is Troponin T, cardiac muscle (TNNT2), found in Homo sapiens (Human).